Consider the following 356-residue polypeptide: Protein ATP1B4 (356 aa).

The Nuclear portion of the chain corresponds to 1–109 (MRRQLRSRRA…SLARTGQSRS (109 aa)). Residues 26 to 78 (EANHNYLADEEEEAEEEAQVMMVPGLEEEEEEEEGKEEEEEREEEEGQGQSTG) form a disordered region. Composition is skewed to acidic residues over residues 33–43 (ADEEEEAEEEA) and 51–72 (LEEE…EEEG). The helical; Signal-anchor for type II membrane protein transmembrane segment at 110–130 (LILVIYFFFYASLAAVITLFI) threads the bilayer. Over 131-356 (YMLFLAISPY…RIIFTLNIET (226 aa)) the chain is Perinuclear space.

It belongs to the X(+)/potassium ATPases subunit beta family. Associates with a SMAD7-transcriptional complex. Interacts with TOR1AIP1. Does not associate with known Na,K-ATPase alpha-subunits. Interacts with SNW1. In terms of tissue distribution, expressed in skeletal muscle (at protein level). Expressed during postnatal development in skeletal muscle and heart.

The protein resides in the nucleus inner membrane. Functionally, may act as a transcriptional coregulator during muscle development through its interaction with SNW1. Has lost its ancestral function as a Na,K-ATPase beta-subunit. The chain is Protein ATP1B4 (Atp1b4) from Mus musculus (Mouse).